The following is a 780-amino-acid chain: LPS-assembly protein LptD (780 aa).

Positions Met-1–Ala-24 are cleaved as a signal peptide.

The protein belongs to the LptD family. Component of the lipopolysaccharide transport and assembly complex. Interacts with LptE and LptA.

The protein resides in the cell outer membrane. Together with LptE, is involved in the assembly of lipopolysaccharide (LPS) at the surface of the outer membrane. The sequence is that of LPS-assembly protein LptD from Sodalis glossinidius (strain morsitans).